The chain runs to 51 residues: Large ribosomal subunit protein bL33 (51 aa).

The protein belongs to the bacterial ribosomal protein bL33 family.

In Nitrosospira multiformis (strain ATCC 25196 / NCIMB 11849 / C 71), this protein is Large ribosomal subunit protein bL33.